The following is a 2065-amino-acid chain: Cytoskeleton-associated protein 5-A (2065 aa).

TOG stretches follow at residues 1 to 240 (MGDD…DLKA) and 264 to 515 (VDAY…KETK). HEAT repeat units follow at residues 120–157 (EKAE…EFGS), 160–197 (MTLK…WIRD), 270–311 (LEAV…NPKI), 314–352 (GDFA…GLRK), 356–393 (SYAG…TTTL), 395–432 (NISE…STLP), and 436–477 (LKPF…VNPF). The tract at residues 500 to 574 (NGKKGGAAAG…GATAKGKKAV (75 aa)) is disordered. Residues 538-568 (KAAAAPKKAPAAKPGGPVKKAKAPASSGATA) are compositionally biased toward low complexity. The interval 644–808 (KPGFKETNFQ…LSQIDAEFEK (165 aa)) is TOG 3. HEAT repeat units lie at residues 652–689 (FQVM…KVGD) and 748–785 (INVK…YMGA). Residues 809-849 (MKGQTPPVSIRGSKHGSGRDEGEEGEEQDEDAPADVTDLLP) form a disordered region. Acidic residues predominate over residues 829–841 (EGEEGEEQDEDAP). Residues 846–1090 (DLLPRTDISD…AGPPGKASSK (245 aa)) are TOG 4. 4 HEAT repeats span residues 852 to 889 (DISD…EAKF), 892 to 929 (PSIG…AMGH), 933 to 970 (QHVK…QTGM), and 1015 to 1052 (CVPY…KMSK). A compositionally biased stretch (low complexity) spans 1074–1115 (ASMPAKPAGPPGKASSKQPPAVAQASASPPPAASSDSGSSTS). The disordered stretch occupies residues 1074 to 1192 (ASMPAKPAGP…AKDEEDKSGP (119 aa)). The span at 1126-1163 (PGTQASKAKTQSVSSEGNTSLNPSNTSLTPSKANTSLS) shows a compositional bias: polar residues. An interaction with microtubule lattice region spans residues 1150-1235 (NTSLTPSKAN…IEQLKTQMSP (86 aa)). Residues 1191–1460 (GPIYIIVPNG…ERIKRAGKKQ (270 aa)) are TOG 5. HEAT repeat units lie at residues 1251 to 1288 (QRQI…RFFD), 1295 to 1318 (MKCL…LTEM), 1319 to 1355 (EGTS…VYPA), 1357 to 1390 (KMFN…SYGM), and 1395 to 1432 (PTPA…VHGE). 2 disordered regions span residues 1982 to 2001 (DNAK…KSSA) and 2028 to 2065 (VELD…SSRK). Residues 2002–2065 (PAVVSSTDML…RLERIKSSRK (64 aa)) form an interaction with tacc3 region. Residues 2038–2048 (STTTSSSASST) are compositionally biased toward low complexity. The segment covering 2051-2065 (DDLKKRLERIKSSRK) has biased composition (basic and acidic residues).

It belongs to the TOG/XMAP215 family. As to quaternary structure, interacts with tacc3; two molecules of ckap5 interact with 1 molecule of tacc3 probably mediated by coiled coil domains forming a four-helix bundle. Interacts with tacc3 and clathrin forming the TACC3/ch-TOG/clathrin complex located at spindle inter-microtubules bridges. Interacts with ndc80; indicative for an association with the NDC80 comnplex.

Its subcellular location is the cytoplasm. It is found in the cytoskeleton. The protein localises to the spindle pole. The protein resides in the spindle. It localises to the microtubule organizing center. Its subcellular location is the centrosome. It is found in the chromosome. The protein localises to the centromere. The protein resides in the kinetochore. Functionally, binds to the plus end of microtubules and regulates microtubule dynamics and microtubule organization. Acts as a processive microtubule polymerase. Promotes cytoplasmic microtubule nucleation and elongation. Plays a major role in organizing spindle poles. In spindle formation protects kinetochore microtubules from depolymerization by kif2c and has an essential role in centrosomal microtubule assembly independently of kif2c activity. Contributes to centrosome integrity. Acts as a component of the TACC3/ch-TOG/clathrin complex proposed to contribute to stabilization of kinetochore fibers of the mitotic spindle by acting as inter-microtubule bridge. Enhances the strength of NDC80 complex-mediated kinetochore-tip microtubule attachments. The chain is Cytoskeleton-associated protein 5-A (ckap5-a) from Xenopus laevis (African clawed frog).